The sequence spans 312 residues: D-alanine--D-alanine ligase (312 aa).

An ATP-grasp domain is found at 99–304; the sequence is KKILKAEGIP…FEDLVEKILM (206 aa). ATP is bound at residue 131 to 186; sequence LQTLKLPVVIKAPREGSTIGIEFVFSKQELPKAIKKVLEIDKQLLVEEFIEGVEVT. The Mg(2+) site is built by D257, E271, and N273.

It belongs to the D-alanine--D-alanine ligase family. It depends on Mg(2+) as a cofactor. Mn(2+) serves as cofactor.

The protein localises to the cytoplasm. It carries out the reaction 2 D-alanine + ATP = D-alanyl-D-alanine + ADP + phosphate + H(+). Its pathway is cell wall biogenesis; peptidoglycan biosynthesis. Functionally, cell wall formation. The chain is D-alanine--D-alanine ligase from Carboxydothermus hydrogenoformans (strain ATCC BAA-161 / DSM 6008 / Z-2901).